Reading from the N-terminus, the 190-residue chain is Elongation factor P-like protein (190 aa).

This sequence belongs to the elongation factor P family.

This chain is Elongation factor P-like protein, found in Pseudoalteromonas translucida (strain TAC 125).